The primary structure comprises 1548 residues: Lysine-specific demethylase 5D (1548 aa).

Residues 14-55 (CPVFEPSWAEFRDPLGYIAKIRPIAEKSGICKIRPPADWQPP) enclose the JmjN domain. The 91-residue stretch at 79–169 (TRVKLNYLDQ…IIYPYEIFQS (91 aa)) folds into the ARID domain. Residues K205, K229, K244, and K279 each participate in a glycyl lysine isopeptide (Lys-Gly) (interchain with G-Cter in SUMO2) cross-link. The segment at 208-229 (CYSRRGKRLQPEPEPTEEDIEK) is disordered. Phosphoserine is present on residues S300 and S316. The PHD-type 1 zinc-finger motif lies at 325-371 (VCRICSRGDEVDKFLLCDGCSDNYHIFCLLPPLSEVPKGVWRCPKCI). 2-oxoglutarate is bound at residue Y439. In terms of domain architecture, JmjC spans 467–633 (EYAACGWNLN…VGRQCIEHYR (167 aa)). 2 residues coordinate Fe cation: H513 and E515. S521, N523, and K531 together coordinate 2-oxoglutarate. H601 provides a ligand contact to Fe cation. A C5HC2 zinc finger spans residues 706–758 (CIKCKTTCFLSALACYDCPDSLVCLSHINDLCKCSRNRQYLRYRYTLDELPAM). Phosphoserine occurs at positions 889 and 893. A Glycyl lysine isopeptide (Lys-Gly) (interchain with G-Cter in SUMO2) cross-link involves residue K1123. A PHD-type 2 zinc finger spans residues 1182 to 1243 (ICICGQVCAG…DTKFLCPLCM (62 aa)). S1355 is subject to Phosphoserine. A disordered region spans residues 1438–1468 (KPENPGNWSEEQTPERRRQRRQKVVLSRKGE).

This sequence belongs to the JARID1 histone demethylase family. In terms of assembly, interacts withPCGF6, MSH5, ZMYND8, AR. It depends on L-ascorbate as a cofactor. Requires Fe(2+) as cofactor.

The protein resides in the nucleus. It carries out the reaction N(6),N(6),N(6)-trimethyl-L-lysyl(4)-[histone H3] + 3 2-oxoglutarate + 3 O2 = L-lysyl(4)-[histone H3] + 3 formaldehyde + 3 succinate + 3 CO2. Histone demethylase that specifically demethylates 'Lys-4' of histone H3, thereby playing a central role in histone code. Does not demethylate histone H3 'Lys-9', H3 'Lys-27', H3 'Lys-36', H3 'Lys-79' or H4 'Lys-20'. Demethylates trimethylated and dimethylated but not monomethylated H3 'Lys-4'. May play a role in spermatogenesis. Involved in transcriptional repression of diverse metastasis-associated genes; in this function seems to cooperate with ZMYND8. Suppresses prostate cancer cell invasion. Regulates androgen receptor (AR) transcriptional activity by demethylating H3K4me3 active transcription marks. The protein is Lysine-specific demethylase 5D (Kdm5d) of Mus musculus (Mouse).